The sequence spans 290 residues: Protein MGF 110-9L (290 aa).

The signal sequence occupies residues methionine 1–serine 19. The stretch at methionine 1 to alanine 160 is one A repeat. The next 2 helical transmembrane spans lie at valine 128–valine 148 and leucine 163–asparagine 183. A B repeat occupies threonine 161–leucine 290.

This sequence belongs to the asfivirus MGF 110 family.

It is found in the membrane. This is Protein MGF 110-9L from Ornithodoros (relapsing fever ticks).